The following is a 158-amino-acid chain: Fucolectin (158 aa).

The tract at residues 16 to 148 is F5/8 type C-like; that stretch reads KATQSAQLRG…TSESLHLCEV (133 aa). Ca(2+) contacts are provided by asparagine 35, aspartate 38, asparagine 40, and serine 49. Disulfide bonds link cysteine 50-cysteine 146, cysteine 82-cysteine 83, and cysteine 108-cysteine 124. The alpha-L-fucose site is built by histidine 52 and arginine 79. The Cell attachment site motif lies at 79–81; that stretch reads RGD. Arginine 86 provides a ligand contact to alpha-L-fucose. Ca(2+)-binding residues include cysteine 146 and glutamate 147.

The protein belongs to the fucolectin family. In terms of assembly, homotrimer.

Its subcellular location is the secreted. Acts as a defensive agent. Recognizes blood group fucosylated oligosaccharides including A, B, H and Lewis B-type antigens. Does not recognize Lewis A antigen and has low affinity for monovalent haptens. This is Fucolectin from Anguilla anguilla (European freshwater eel).